The following is a 66-amino-acid chain: U1-theraphotoxin-Cg1a 1 (66 aa).

Positions 1–21 (MKTSALFVIFGLVLLFCNSFA) are cleaved as a signal peptide. Residues 22–29 (AELKTTGR) constitute a propeptide that is removed on maturation. 3 disulfides stabilise this stretch: C31–C46, C38–C51, and C45–C58. Residue P63 is modified to Proline amide.

It belongs to the neurotoxin 10 (Hwtx-1) family. 46 (Jztx-7/10/12) subfamily. Expressed by the venom gland.

Its subcellular location is the secreted. Probable ion channel inhibitor. The chain is U1-theraphotoxin-Cg1a 1 from Chilobrachys guangxiensis (Chinese earth tiger tarantula).